Here is a 665-residue protein sequence, read N- to C-terminus: Sodium-dependent phosphate transporter 1-B (665 aa).

6 helical membrane-spanning segments follow: residues 26–46 (YMWLLIVGFIIAFVLAFSVGA), 67–87 (ACILASIFETLGSVLLGAKVS), 107–127 (LMAGSVSAMFGSAVWQLAASF), 163–183 (IVASWFLSPLLSGVMSAVLFY), 202–222 (ALPFFYAVTMGINLFSIMFTG), and 235–255 (GVLLISIGFGIITALIVWFAV). 2 disordered regions span residues 294–345 (VPEE…APKT) and 423–442 (ESEFRASEDGDKEKAGAQER). Low complexity predominate over residues 296 to 306 (EESSVLSSSTP). Residues 329–338 (ADQKDCKESD) are compositionally biased toward basic and acidic residues. A run of 4 helical transmembrane segments spans residues 499–519 (VSMLFQFLQILTACFGSFAHG), 548–568 (TPIWLLLYGGVGICVGLWVWG), 588–608 (FSIELASAVTVVVASNIGLPV), and 638–658 (IFMAWFVTVPISGLISAAIMA).

Belongs to the inorganic phosphate transporter (PiT) (TC 2.A.20) family.

It localises to the membrane. Sodium-phosphate symporter which plays a fundamental housekeeping role in phosphate transport. The chain is Sodium-dependent phosphate transporter 1-B (slc20a1b) from Danio rerio (Zebrafish).